We begin with the raw amino-acid sequence, 82 residues long: Sulfur carrier protein TusA (82 aa).

Cys19 serves as the catalytic Cysteine persulfide intermediate.

The protein belongs to the sulfur carrier protein TusA family.

Its subcellular location is the cytoplasm. Sulfur carrier protein which probably makes part of a sulfur-relay system. The chain is Sulfur carrier protein TusA from Vibrio cholerae serotype O1 (strain ATCC 39541 / Classical Ogawa 395 / O395).